A 124-amino-acid polypeptide reads, in one-letter code: Fluoride-specific ion channel FluC (124 aa).

4 consecutive transmembrane segments (helical) span residues 3 to 23 (VLLI…VSNL), 34 to 54 (IGTL…FIFI), 68 to 88 (LLLI…IETF), and 100 to 120 (ALNV…GVLI). Glycine 75 and threonine 78 together coordinate Na(+).

Belongs to the fluoride channel Fluc/FEX (TC 1.A.43) family.

It is found in the cell inner membrane. It carries out the reaction fluoride(in) = fluoride(out). With respect to regulation, na(+) is not transported, but it plays an essential structural role and its presence is essential for fluoride channel function. Fluoride-specific ion channel. Important for reducing fluoride concentration in the cell, thus reducing its toxicity. This is Fluoride-specific ion channel FluC from Coxiella burnetii (strain CbuK_Q154) (Coxiella burnetii (strain Q154)).